The following is a 413-amino-acid chain: Peptidase T (413 aa).

Residue H82 participates in Zn(2+) binding. D84 is a catalytic residue. A Zn(2+)-binding site is contributed by D145. Residue E179 is the Proton acceptor of the active site. Residues E180, D202, and H384 each contribute to the Zn(2+) site.

It belongs to the peptidase M20B family. It depends on Zn(2+) as a cofactor.

The protein resides in the cytoplasm. It carries out the reaction Release of the N-terminal residue from a tripeptide.. Functionally, cleaves the N-terminal amino acid of tripeptides. The protein is Peptidase T of Latilactobacillus sakei subsp. sakei (strain 23K) (Lactobacillus sakei subsp. sakei).